The primary structure comprises 250 residues: NAD(P)H-quinone oxidoreductase subunit K, chloroplastic (250 aa).

Residues cysteine 61, cysteine 62, cysteine 126, and cysteine 157 each coordinate [4Fe-4S] cluster.

The protein belongs to the complex I 20 kDa subunit family. NDH is composed of at least 16 different subunits, 5 of which are encoded in the nucleus. [4Fe-4S] cluster serves as cofactor.

The protein localises to the plastid. It localises to the chloroplast thylakoid membrane. It carries out the reaction a plastoquinone + NADH + (n+1) H(+)(in) = a plastoquinol + NAD(+) + n H(+)(out). The enzyme catalyses a plastoquinone + NADPH + (n+1) H(+)(in) = a plastoquinol + NADP(+) + n H(+)(out). NDH shuttles electrons from NAD(P)H:plastoquinone, via FMN and iron-sulfur (Fe-S) centers, to quinones in the photosynthetic chain and possibly in a chloroplast respiratory chain. The immediate electron acceptor for the enzyme in this species is believed to be plastoquinone. Couples the redox reaction to proton translocation, and thus conserves the redox energy in a proton gradient. This chain is NAD(P)H-quinone oxidoreductase subunit K, chloroplastic, found in Angiopteris evecta (Mule's foot fern).